The primary structure comprises 209 residues: Kynurenine formamidase (209 aa).

Residue Trp20 coordinates substrate. Zn(2+) contacts are provided by His50, His54, and Asp56. His60 serves as the catalytic Proton donor/acceptor. Zn(2+) is bound by residues His161 and Glu173.

The protein belongs to the Cyclase 1 superfamily. KynB family. In terms of assembly, homodimer. Zn(2+) serves as cofactor.

The catalysed reaction is N-formyl-L-kynurenine + H2O = L-kynurenine + formate + H(+). The protein operates within amino-acid degradation; L-tryptophan degradation via kynurenine pathway; L-kynurenine from L-tryptophan: step 2/2. Functionally, catalyzes the hydrolysis of N-formyl-L-kynurenine to L-kynurenine, the second step in the kynurenine pathway of tryptophan degradation. The sequence is that of Kynurenine formamidase from Bacillus cereus (strain ATCC 10987 / NRS 248).